Here is a 165-residue protein sequence, read N- to C-terminus: Endoribonuclease YbeY (165 aa).

Residues His130, His134, and His140 each contribute to the Zn(2+) site.

It belongs to the endoribonuclease YbeY family. The cofactor is Zn(2+).

It is found in the cytoplasm. Its function is as follows. Single strand-specific metallo-endoribonuclease involved in late-stage 70S ribosome quality control and in maturation of the 3' terminus of the 16S rRNA. This Streptococcus pyogenes serotype M28 (strain MGAS6180) protein is Endoribonuclease YbeY.